The primary structure comprises 353 residues: Ribosomal RNA small subunit methyltransferase H (353 aa).

Residues 50–52, aspartate 69, phenylalanine 96, aspartate 117, and glutamine 124 contribute to the S-adenosyl-L-methionine site; that span reads GGY. The disordered stretch occupies residues 276-353; it reads AAQASRHVPG…PAPQGRGPRR (78 aa).

The protein belongs to the methyltransferase superfamily. RsmH family.

Its subcellular location is the cytoplasm. The catalysed reaction is cytidine(1402) in 16S rRNA + S-adenosyl-L-methionine = N(4)-methylcytidine(1402) in 16S rRNA + S-adenosyl-L-homocysteine + H(+). Specifically methylates the N4 position of cytidine in position 1402 (C1402) of 16S rRNA. The chain is Ribosomal RNA small subunit methyltransferase H from Methylorubrum extorquens (strain CM4 / NCIMB 13688) (Methylobacterium extorquens).